The following is a 365-amino-acid chain: Spermidine/putrescine import ATP-binding protein PotA (365 aa).

Positions 7–237 (LTLADITKRF…PNNLFVASFI (231 aa)) constitute an ABC transporter domain. 39–46 (GPSGCGKT) is an ATP binding site.

The protein belongs to the ABC transporter superfamily. Spermidine/putrescine importer (TC 3.A.1.11.1) family. The complex is composed of two ATP-binding proteins (PotA), two transmembrane proteins (PotB and PotC) and a solute-binding protein (PotD).

The protein localises to the cell inner membrane. The enzyme catalyses ATP + H2O + polyamine-[polyamine-binding protein]Side 1 = ADP + phosphate + polyamineSide 2 + [polyamine-binding protein]Side 1.. Part of the ABC transporter complex PotABCD involved in spermidine/putrescine import. Responsible for energy coupling to the transport system. The sequence is that of Spermidine/putrescine import ATP-binding protein PotA from Hahella chejuensis (strain KCTC 2396).